A 311-amino-acid polypeptide reads, in one-letter code: uncharacterized protein (311 aa).

The first 13 residues, 1–13, serve as a signal peptide directing secretion; the sequence is MLLSLIFPIAVLG. Asparagine 115 is a glycosylation site (N-linked (GlcNAc...) asparagine).

Its subcellular location is the secreted. This is an uncharacterized protein from Encephalitozoon cuniculi (strain GB-M1) (Microsporidian parasite).